A 327-amino-acid polypeptide reads, in one-letter code: Cyclic AMP-responsive element-binding protein 1 (327 aa).

2 disordered regions span residues 1–29 (MTMDSGADNQQSGDAAVTEAESQQMTVQA) and 94–113 (SEDSQESVDSVTDSQKRREI). Positions 8–146 (DNQQSGDAAV…IEEEKSEEET (139 aa)) constitute a KID domain. The span at 20-29 (AESQQMTVQA) shows a compositional bias: polar residues. Ser119 is modified (phosphoserine; by CaMK1, CaMK2, CaMK4, PKB/AKT1 or PKB/AKT2, RPS6KA3, RPS6KA4, RPS6KA5 and SGK1). A Glycyl lysine isopeptide (Lys-Gly) (interchain with G-Cter in SUMO2) cross-link involves residue Lys122. Residues 126–149 (DLSSDAPGVPRIEEEKSEEETSAP) are disordered. A Phosphoserine; by CaMK2 modification is found at Ser128. Position 257 is a phosphoserine; by HIPK2 (Ser257). The region spanning 269 to 327 (ARKREVRLMKNREAARECRRKKKEYVKCLENRVAVLENQNKTLIEELKALKDLYCHKSD) is the bZIP domain. The basic motif stretch occupies residues 270–295 (RKREVRLMKNREAARECRRKKKEYVK). Residues Lys271 and Lys290 each participate in a glycyl lysine isopeptide (Lys-Gly) (interchain with G-Cter in SUMO1) cross-link. The leucine-zipper stretch occupies residues 297 to 318 (LENRVAVLENQNKTLIEELKAL).

The protein belongs to the bZIP family. In terms of assembly, interacts with PPRC1. Binds DNA as a dimer. This dimer is stabilized by magnesium ions. Interacts, through the bZIP domain, with the coactivators CRTC1/TORC1, CRTC2/TORC2 and CRTC3/TORC3. When phosphorylated on Ser-119, binds CREBBP. Interacts with CREBL2; regulates CREB1 phosphorylation, stability and transcriptional activity. Interacts (phosphorylated form) with TOX3. Interacts with ARRB1. Binds to HIPK2. Interacts with SGK1. Interacts with TSSK4; this interaction facilitates phosphorylation on Ser-119. Forms a complex with KMT2A and CREBBP. Interacts with TOX4; CREB1 is required for full induction of TOX4-dependent activity and the interaction is increased by cAMP and inhibited by insulin. Phosphorylation of Ser-119 allows CREBBP binding. Stimulated by phosphorylation. Phosphorylation of both Ser-128 and Ser-119 in the SCN regulates the activity of CREB and participate in circadian rhythm generation. Phosphorylated upon calcium influx by CaMK4 and CaMK2 on Ser-119. CaMK4 is much more potent than CaMK2 in activating CREB. Phosphorylated by CaMK2 on Ser-128. Phosphorylation of Ser-128 blocks CREB-mediated transcription even when Ser-119 is phosphorylated. Phosphorylated by CaMK1. Phosphorylation of Ser-257 by HIPK2 in response to genotoxic stress promotes CREB1 activity, facilitating the recruitment of the coactivator CBP. Phosphorylated at Ser-119 by RPS6KA3, RPS6KA4 and RPS6KA5 in response to mitogenic or stress stimuli. CREBL2 positively regulates phosphorylation at Ser-119 thereby stimulating CREB1 transcriptional activity. In liver, phosphorylation is induced by fasting or glucagon in a circadian fashion. Phosphorylated by TSSK4 on Ser-119. In terms of processing, sumoylated with SUMO1. Sumoylation on Lys-290, but not on Lys-271, is required for nuclear localization of this protein. Sumoylation is enhanced under hypoxia, promoting nuclear localization and stabilization.

The protein resides in the nucleus. In terms of biological role, phosphorylation-dependent transcription factor that stimulates transcription upon binding to the DNA cAMP response element (CRE), a sequence present in many viral and cellular promoters. Transcription activation is enhanced by the TORC coactivators which act independently of Ser-119 phosphorylation. Involved in different cellular processes including the synchronization of circadian rhythmicity and the differentiation of adipose cells. Regulates the expression of apoptotic and inflammatory response factors in cardiomyocytes in response to ERFE-mediated activation of AKT signaling. This is Cyclic AMP-responsive element-binding protein 1 (Creb1) from Rattus norvegicus (Rat).